Consider the following 147-residue polypeptide: Hemoglobin subunit beta-2 (147 aa).

Positions 3 to 147 constitute a Globin domain; that stretch reads EWTDEERTII…VVSALGRQYH (145 aa). Heme b contacts are provided by His-64 and His-93.

This sequence belongs to the globin family. As to quaternary structure, hb 2 is a heterotetramer of two alpha-2 and two beta-2 chains. Hb 3 is a heterotetramer of two alpha-1 and two beta-2 chains. As to expression, red blood cells.

In terms of biological role, involved in oxygen transport from gills to the various peripheral tissues. The polypeptide is Hemoglobin subunit beta-2 (hbb2) (Gadus morhua (Atlantic cod)).